Here is a 423-residue protein sequence, read N- to C-terminus: Flavohemoprotein B (423 aa).

The Globin domain occupies M1 to E136. A heme b-binding site is contributed by H83. Active-site charge relay system residues include Y93 and E135. Residues W149–N423 form a reductase region. The 119-residue stretch at K150 to N268 folds into the FAD-binding FR-type domain. FAD-binding positions include Y188 and R212–S215. G281–P286 serves as a coordination point for NADP(+). Residue L400–P403 participates in FAD binding.

The protein belongs to the globin family. Two-domain flavohemoproteins subfamily. This sequence in the C-terminal section; belongs to the flavoprotein pyridine nucleotide cytochrome reductase family. It depends on FAD as a cofactor. The cofactor is heme b.

The protein resides in the cytoplasm. It carries out the reaction 2 nitric oxide + NADPH + 2 O2 = 2 nitrate + NADP(+) + H(+). It catalyses the reaction 2 nitric oxide + NADH + 2 O2 = 2 nitrate + NAD(+) + H(+). Functionally, is involved in NO detoxification in an aerobic process, termed nitric oxide dioxygenase (NOD) reaction that utilizes O(2) and NAD(P)H to convert NO to nitrate, which protects the cell from various noxious nitrogen compounds. Therefore, plays a central role in the inducible response to nitrosative stress. In terms of biological role, in the presence of oxygen and NADH, it has NADH oxidase activity, which leads to the generation of superoxide and H(2)O(2). Under anaerobic conditions, it also exhibits nitric oxide reductase and FAD reductase activities. However, all these reactions are much lower than NOD activity. The polypeptide is Flavohemoprotein B (fhbB) (Dictyostelium discoideum (Social amoeba)).